A 124-amino-acid polypeptide reads, in one-letter code: Large ribosomal subunit protein bL12 (124 aa).

The protein belongs to the bacterial ribosomal protein bL12 family. As to quaternary structure, homodimer. Part of the ribosomal stalk of the 50S ribosomal subunit. Forms a multimeric L10(L12)X complex, where L10 forms an elongated spine to which 2 to 4 L12 dimers bind in a sequential fashion. Binds GTP-bound translation factors.

Forms part of the ribosomal stalk which helps the ribosome interact with GTP-bound translation factors. Is thus essential for accurate translation. This is Large ribosomal subunit protein bL12 from Borreliella burgdorferi (strain ZS7) (Borrelia burgdorferi).